Here is a 172-residue protein sequence, read N- to C-terminus: Adenylate kinase isoenzyme 6 (172 aa).

Glycine 13, glycine 15, lysine 16, threonine 17, and threonine 18 together coordinate ATP. Residues asparagine 33–leucine 56 are NMPbind. The segment at threonine 108–aspartate 118 is LID. Arginine 109 lines the ATP pocket.

Belongs to the adenylate kinase family. AK6 subfamily. In terms of assembly, monomer and homodimer. Interacts with small ribosomal subunit protein uS11. Not a structural component of 43S pre-ribosomes, but transiently interacts with them by binding to uS11. Interacts with COIL (via C-terminus).

The protein localises to the cytoplasm. It is found in the nucleus. Its subcellular location is the nucleoplasm. The protein resides in the cajal body. The catalysed reaction is AMP + ATP = 2 ADP. It carries out the reaction ATP + H2O = ADP + phosphate + H(+). Broad-specificity nucleoside monophosphate (NMP) kinase that catalyzes the reversible transfer of the terminal phosphate group between nucleoside triphosphates and monophosphates. Also has ATPase activity. Involved in the late cytoplasmic maturation steps of the 40S ribosomal particles, specifically 18S rRNA maturation. While NMP activity is not required for ribosome maturation, ATPase activity is. Associates transiently with small ribosomal subunit protein uS11. ATP hydrolysis breaks the interaction with uS11. May temporarily remove uS11 from the ribosome to enable a conformational change of the ribosomal RNA that is needed for the final maturation step of the small ribosomal subunit. Its NMP activity may have a role in nuclear energy homeostasis. May be involved in regulation of Cajal body (CB) formation. The sequence is that of Adenylate kinase isoenzyme 6 from Rattus norvegicus (Rat).